The sequence spans 347 residues: MKPPILIIIMATIMTGTMIVMLSSHWLLIWIGFEMNMLAVIPVLMKKYNPRTMEASTKYFLTQATASMLLMMGVTINLLYSGQWVVSKISNPAASIMMTIALTMKLGLSPFHFWVPEVTQGITLTSGMILLTWQKIAPMSVLYQISPSINTNLLMLVALVSVLVGGWGGLNQTQLRKIMAYSSIAHMGWMAAIIIYNPTMMILNLVLYILMTLSTFMLFMLNSSTTTLSLSHMWNKFPLITSIILILMLSLGGLPPLSGFIPKWMIIQELTKNNMIIIPTLMAITALLNLYFYLRLTYSTALTMFPSANNMKMKWQFEHTKKTILLPPLIITSTMLLPLTPMLSILD.

The next 11 membrane-spanning stretches (helical) occupy residues 3–23 (PPIL…VMLS), 25–45 (HWLL…PVLM), 66–86 (ASML…QWVV), 96–116 (IMMT…FWVP), 122–142 (ITLT…MSVL), 149–169 (INTN…GWGG), 178–198 (IMAY…IYNP), 201–221 (MILN…LFML), 237–257 (FPLI…LPPL), 274–294 (NMII…YFYL), and 323–343 (TILL…TPML).

Belongs to the complex I subunit 2 family. In terms of assembly, core subunit of respiratory chain NADH dehydrogenase (Complex I) which is composed of 45 different subunits. Interacts with TMEM242.

It is found in the mitochondrion inner membrane. The catalysed reaction is a ubiquinone + NADH + 5 H(+)(in) = a ubiquinol + NAD(+) + 4 H(+)(out). In terms of biological role, core subunit of the mitochondrial membrane respiratory chain NADH dehydrogenase (Complex I) which catalyzes electron transfer from NADH through the respiratory chain, using ubiquinone as an electron acceptor. Essential for the catalytic activity and assembly of complex I. The protein is NADH-ubiquinone oxidoreductase chain 2 of Canis rufus (Red wolf).